The following is a 704-amino-acid chain: Protein NPG1 (704 aa).

TPR repeat units follow at residues 24 to 57 (NGICMKTTEVEAKLDEGNIQEAESSLREGLSLNF), 58 to 90 (EEARALLGRLEYQRGNLEGALRVFEGIDLQAAI), 177 to 210 (SHAVELLPALWKESGDYQEAISAYRRALLSQWNL), 309 to 342 (IERWNTLALSYSAAGQNSAAVNLLRKSLHKHEQP), 430 to 463 (PDLIFELGVQYAEQRNLKAASRYAKEFIDATGGS), 555 to 588 (FEVWHGLAYLYSSLSHWNDVEVCLKKAGELKQYS), 589 to 622 (ASMLHTEGRMWEGRKEFKPALAAFLDGLLLDGSS), and 662 to 695 (RKAWYYLGMVHKSDGRIADATDCFQAASMLEESD).

Interacts with calmodulin in a calcium-dependent manner. In terms of tissue distribution, expressed only in pollen and in pollen tubes.

Calmodulin-binding protein essential for pollen germination, but not necessary for microsporogenesis or gametogenesis. The polypeptide is Protein NPG1 (Arabidopsis thaliana (Mouse-ear cress)).